Consider the following 214-residue polypeptide: Thymidylate kinase (214 aa).

13–20 lines the ATP pocket; sequence GPDACGKS.

This sequence belongs to the thymidylate kinase family.

It catalyses the reaction dTMP + ATP = dTDP + ADP. Its function is as follows. Phosphorylation of dTMP to form dTDP in both de novo and salvage pathways of dTTP synthesis. This is Thymidylate kinase from Malacoplasma penetrans (strain HF-2) (Mycoplasma penetrans).